Consider the following 322-residue polypeptide: FAD-dependent monooxygenase subE (322 aa).

Residues E35, G49, R108, and D313 each contribute to the FAD site.

Belongs to the paxM FAD-dependent monooxygenase family. FAD serves as cofactor.

The protein operates within secondary metabolite biosynthesis; terpenoid biosynthesis. Functionally, FAD-dependent monooxygenase; part of the gene cluster that mediates the biosynthesis of the immunosuppressants subglutinols, meroterpenoids consisting of an alpha-pyrone (4-hydroxy-5,6-dimethyl-2-pyrone) moiety attached to a decalin core fused to a five-membered cyclic ether carrying a prenylside chain. The first step of the pathway is the synthesis of the alpha-pyrone moiety by the polyketide synthase subA via condensation of one acetyl-CoA starter unit with 3 malonyl-CoA units and 2 methylations. The alpha-pyrone is then combined with geranylgeranyl pyrophosphate (GGPP) formed by the GGPP synthase subD through the action of the prenyltransferase subC to yield a linear alpha-pyrone diterpenoid. Subsequent steps in the subglutinol biosynthetic pathway involve the decalin core formation, which is thought to be initiated by the epoxidation of the C10-C11 olefin by the FAD-dependent oxidoreductase subE. The following cyclization cascade would be catalyzed by the terpene cyclase subB. Lastly, the FAD-dependent dehydrogenase subF probably catalyzes the five-membered cyclic ether formation to complete the formation of subglutinol A. Subsequent redox reactions appear to give rise to subglutinol C and D, however, it remains unclear which enzymes are responsible for these transformations. SubD may have secondary function in the conversion of the identified subglutinols to subglutinol analog 45, which seems to be the major product of the cluster. This is FAD-dependent monooxygenase subE from Metarhizium robertsii (strain ARSEF 23 / ATCC MYA-3075) (Metarhizium anisopliae (strain ARSEF 23)).